The sequence spans 928 residues: Nitrogen network kinase 1 (928 aa).

Positions 1–12 (MFTSQRQLRQNG) are enriched in polar residues. Disordered stretches follow at residues 1-43 (MFTS…SYGR) and 81-118 (HEHPSRSTLVQLQTRSQPDDVASSQVNPEGGTDDLELG). The span at 13–29 (SPMSSSRSSQHSSGTAS) shows a compositional bias: low complexity. Polar residues-rich tracts occupy residues 30–40 (PISDSPASNRS) and 86–107 (RSTLVQLQTRSQPDDVASSQVN). A phosphoserine mark is found at Ser178 and Ser179. The tract at residues 374–394 (ANDDNINSRNTPNNSNDTYVN) is disordered. Positions 375–391 (NDDNINSRNTPNNSNDT) are enriched in low complexity. Residues Ser405 and Ser426 each carry the phosphoserine modification. A Protein kinase domain is found at 449-912 (HRLGKIIGFG…WKLKRIEEVL (464 aa)). Residues 455–463 (IGFGAWGII) and Lys478 contribute to the ATP site. Asp580 acts as the Proton acceptor in catalysis. Disordered stretches follow at residues 670–741 (ENRK…KYIG) and 767–813 (YDSP…SGSS). Residues 683–696 (VSSSSHSLKHLNQP) show a composition bias toward polar residues. Ser737 carries the post-translational modification Phosphoserine. Residue Tyr739 is modified to Phosphotyrosine. Residues 769–813 (SPDSSQSEISAASSSSSNLSSLSSSTKASAVTNSGVTTSSPSGSS) show a composition bias toward low complexity.

This sequence belongs to the protein kinase superfamily. Ser/Thr protein kinase family. In terms of assembly, interacts with URE2 and GDH2. Also interacts with the TORC1 kinase complex.

It localises to the cytoplasm. It catalyses the reaction L-seryl-[protein] + ATP = O-phospho-L-seryl-[protein] + ADP + H(+). The enzyme catalyses L-threonyl-[protein] + ATP = O-phospho-L-threonyl-[protein] + ADP + H(+). Its function is as follows. Serine/threonine-protein kinase involved in the phosphorylation of the NAD(+)-dependent glutamate dehydrogenase GDH2. When overexpressed, confers hypersensitivity to rapamycin and induces rapid nuclear accumulation of GLN3 to activate the transcription of nitrogen-regulated genes. This is Nitrogen network kinase 1 (NNK1) from Saccharomyces cerevisiae (strain ATCC 204508 / S288c) (Baker's yeast).